Reading from the N-terminus, the 576-residue chain is TRAF-type zinc finger domain-containing protein 1 (576 aa).

A2 bears the N-acetylalanine mark. The segment at 27-103 adopts a TRAF-type zinc-finger fold; it reads IHEIHCQRNI…DLELSVVKLK (77 aa). 8 positions are modified to phosphoserine: S278, S320, S326, S327, S409, S415, S430, and S450. The segment at 402-432 is disordered; sequence EGIPTQDSQPEDRSPELSRRRVKHQGDLSSG. The span at 411–420 shows a compositional bias: basic and acidic residues; sequence PEDRSPELSR. 2 disordered regions span residues 465–491 and 529–576; these read LNSSGPRSDCQRSPPGVLKLNNSGSQD and HGSP…EEEE. S531 bears the Phosphoserine mark. The segment covering 540–552 has biased composition (polar residues); the sequence is GSRSSRVTPTAAS.

Interacts with MAVS, TICAM1, TRAF1, TRAF2, TRAF3 and TRAF6. As to expression, expressed in vascular smooth muscle cells.

Functionally, negative feedback regulator that controls excessive innate immune responses. Regulates both Toll-like receptor 4 (TLR4) and DDX58/RIG1-like helicases (RLH) pathways. May inhibit the LTR pathway by direct interaction with TRAF6 and attenuation of NF-kappa-B activation. May negatively regulate the RLH pathway downstream from MAVS and upstream of NF-kappa-B and IRF3. This chain is TRAF-type zinc finger domain-containing protein 1 (Trafd1), found in Rattus norvegicus (Rat).